We begin with the raw amino-acid sequence, 512 residues long: MEQPAGLQVDYMFRGVEHAVRVVVSGQVLELEVEDRMTADQWRGEFDANFIEDLTHKTGNFKQFSIFCNMLESALTQSSESVTLDLLTYTDLESLRSRKLGGRPGPCPRSAQLNSKRYLILIYSVEFDRIHYPLPLPYQGKPDPVVLQGIIRSLKEELGHLRGMNGGQDARETEIWHLREQVTRLASEKRELEAQLGRSREEALAGRAARQEAESLRGLVRGLELELRQERGLGGRAAGRRSQDCRRLAKELEEVKASERNLRARLKTLNCELAMYRRGRRTLPAGAREDRALSSRERSTSRGRTATRSSSRESNRGARSHGRPAHPSPSPTGSRVPRFDPTAFVKAKEKKQREIRMKRQQQQQQQRNRMGSGGSGDGPSVSWSHQTRPPAAVTGRGDAANRSRNRSSSVDSFRSRCSSVSSCSELEDFSQSVSKSRRCRGRGKPPSPIPWSGSKTKSTTRERNNHQRHLASSGAWVPIKEYSSDYQGADMAEIDARLKALQEYMNRLDTRS.

At Met-1 the chain carries N-acetylmethionine. The tract at residues Met-1–Pro-142 is head domain. 2 coiled-coil regions span residues Trp-176–Ala-203 and Arg-246–Leu-273. A Phosphothreonine modification is found at Thr-282. Disordered stretches follow at residues Thr-282–Ser-415 and Ser-430–Ser-472. Over residues Ala-287–Thr-300 the composition is skewed to basic and acidic residues. A phosphoserine mark is found at Ser-328, Ser-330, Ser-372, and Ser-375. Residues Arg-406–Ser-415 show a composition bias toward low complexity. 2 positions are modified to phosphoserine: Ser-447 and Ser-473.

It belongs to the CCDC61 family. In terms of assembly, forms homodimers (via head domain). Interacts with CEP170. Interacts with PCM1 and CEP131. Binds tubulin.

It localises to the cytoplasm. Its subcellular location is the cytoskeleton. The protein resides in the microtubule organizing center. It is found in the centrosome. The protein localises to the centriolar satellite. It localises to the cilium basal body. Its function is as follows. Microtubule-binding centrosomal protein required for centriole cohesion, independently of the centrosome-associated protein/CEP250 and rootletin/CROCC linker. In interphase, required for anchoring microtubule at the mother centriole subdistal appendages and for centrosome positioning. During mitosis, may be involved in spindle assembly and chromatin alignment by regulating the organization of spindle microtubules into a symmetrical structure. Plays a non-essential role in ciliogenesis. In Rattus norvegicus (Rat), this protein is Centrosomal protein CCDC61.